The primary structure comprises 265 residues: Formyltransferase/hydrolase complex Fhc subunit C (265 aa).

It belongs to the FwdC/FmdC family. In terms of assembly, octaheteromer. Part of the formyltransferase/hydrolase complex fhc; composed of FhcA, FhcB, FhcC and FhcD.

The protein resides in the cytoplasm. Its pathway is one-carbon metabolism; formaldehyde degradation; formate from formaldehyde (H(4)MPT route): step 4/5. Involved in the transformation of 5-formyl tetrahydromethanopterin (5-formyl-H(4)MPT) to methanofuran (MFR) and formate via the formylmethanofuran (formyl-MFR). In Methylorubrum extorquens (strain ATCC 14718 / DSM 1338 / JCM 2805 / NCIMB 9133 / AM1) (Methylobacterium extorquens), this protein is Formyltransferase/hydrolase complex Fhc subunit C (fhcC).